Consider the following 125-residue polypeptide: Snaclec coagulation factor IX/factor X-binding protein subunit B (125 aa).

Residues 1–122 enclose the C-type lectin domain; it reads DCSSGWTAYG…SLFGHFVCKS (122 aa). 3 disulfide bridges follow: Cys2–Cys13, Cys30–Cys120, and Cys97–Cys112. Residues Ser41 and Glu47 each coordinate Ca(2+).

It belongs to the snaclec family. As to quaternary structure, heterodimer of subunits A and B; disulfide-linked. As to expression, expressed by the venom gland.

The protein localises to the secreted. In terms of biological role, anticoagulant protein which binds to coagulation factor IX (F9) and coagulation factor X (F10) in the presence of calcium. It may bind the gamma-carboxyglutamic acid-domain regions of factors with a 1 to 1 stoichiometry. The dissociation constant (K(d)) are 6.6 nM for factor IX (F9) and 125 nM for factor X (F10). Does not bind carbohydrates. This Echis carinatus (Saw-scaled viper) protein is Snaclec coagulation factor IX/factor X-binding protein subunit B.